An 805-amino-acid polypeptide reads, in one-letter code: Replication restart protein PriA (805 aa).

The segment at 1 to 110 (MNFAEVIVDV…QAMLPAALKA (110 aa)) is 3'BD. The tract at residues 111–166 (KYEKELKIAHGADLPPQVERLFSETKTLLYSDIPDHETLKLIQRHVQKGDIDVTYK) is linker. A WH region spans residues 167–253 (VAQKTNKKMV…KESYEEVYRD (87 aa)). In terms of domain architecture, Helicase ATP-binding spans 282–448 (TLDSDEHKVF…QKGVYELLSL (167 aa)). 295–302 (GVTGSGKT) is an ATP binding site. Residues 391 to 394 (DEEH) carry the DEAH box motif. Zn(2+) contacts are provided by Cys-510, Cys-513, Cys-519, Cys-522, Cys-537, Cys-540, Cys-550, and Cys-553. One can recognise a Helicase C-terminal domain in the interval 545-699 (PVPHTCPECA…TFYQHEMAHR (155 aa)).

Belongs to the helicase family. PriA subfamily. As to quaternary structure, monomer. Component of the replication restart primosome which assembles in this order; PriA, DnaD then DnaB. The preferred DNA substrate mimics an arrested DNA replication fork with unreplicated lagging strand. Interacts with DnaD but not DnaB. Interacts with SSB (sbbA) via the latter's 35 residue C-terminal tail which tethers PriA to ssDNA. Colocalizes with DNA pol III subunit gamma/tau (dnaX). May interact with RarA. Zn(2+) is required as a cofactor.

It localises to the cytoplasm. The protein localises to the nucleoid. The enzyme catalyses Couples ATP hydrolysis with the unwinding of duplex DNA by translocating in the 3'-5' direction.. It catalyses the reaction ATP + H2O = ADP + phosphate + H(+). Its function is as follows. Initiates the restart of stalled replication forks, which reloads the replicative helicase on sites other than the origin of replication. Recognizes and binds to abandoned replication forks and remodels them to uncover a helicase loading site. Promotes assembly of the primosome at these replication forks. Serves as the initiating protein for assembly of the replication restart primosome; binding of PriA to an arrested DNA replication fork with unreplicated lagging strand triggers assembly. Sequentially DnaD (possibly as a dimer) and DnaB homotetramers bind. Assembly probably continues by loading of the DnaC replicative helicase aided by helicase loader DnaI. A single-strand (ss)DNA-dependent ATPase with helicase activity. Recognizes and binds the arrested nascent DNA chain at stalled replication forks. Binds forked DNA substrates and makes a larger complex with RarA; RarA has no effect on the helicase function. Binds ssDNA, D-loops and replication fork-like substrates but not double-stranded (ds)DNA; the preferred DNA substrate mimics an arrested DNA replication fork with an unreplicated lagging strand. Recognizes nicked dsDNA. A supershift on ssDNA occurs in the presence of single-stranded binding protein (SSB). Cannot substitute for E.coli PriA. In terms of biological role, required for replication of plasmids that have a rolling circle mechanism, which produces circular single-stranded (ss)DNA intermediates corresponding to the lagging strand template, which are then converted into double-stranded (ds)DNA; priA is required to activate the conversion of ssDNA into dsDNA. This Bacillus subtilis (strain 168) protein is Replication restart protein PriA.